We begin with the raw amino-acid sequence, 370 residues long: Protein Mut11 (370 aa).

Residues 1-22 are disordered; the sequence is MARGPGDTDMDEASADAAIPSS. 7 WD repeats span residues 38–77, 80–119, 122–162, 165–204, 208–247, 262–301, and 329–370; these read GHTK…RVNT, GHSC…CLRT, GHTN…CLRE, AHSD…CLKT, RDSP…TRRT, GFLG…VVGR, and GHTA…PAAA.

This sequence belongs to the WD repeat WDR5/wds family.

The protein localises to the nucleus. Part of a complex involved in 'Lys-4' histone H3 methylation. This is Protein Mut11 (Mut11) from Chlamydomonas reinhardtii (Chlamydomonas smithii).